The sequence spans 157 residues: Transcriptional repressor NrdR (157 aa).

The segment at 1-21 is disordered; that stretch reads MKCPNCHKNGSRVVDSRPADN. A zinc finger spans residues 3-34; sequence CPNCHKNGSRVVDSRPADNGHAIRRRRECEQC. The 91-residue stretch at 49 to 139 folds into the ATP-cone domain; sequence LLVIKKNGTR…VYREFKDMHA (91 aa).

It belongs to the NrdR family. Zn(2+) serves as cofactor.

Functionally, negatively regulates transcription of bacterial ribonucleotide reductase nrd genes and operons by binding to NrdR-boxes. The sequence is that of Transcriptional repressor NrdR from Ligilactobacillus salivarius (strain UCC118) (Lactobacillus salivarius).